A 397-amino-acid polypeptide reads, in one-letter code: Elongation factor Tu (397 aa).

One can recognise a tr-type G domain in the interval 10–207 (KPHCNIGTIG…EVDKYIPQPE (198 aa)). Residues 19 to 26 (GHVDHGKT) are G1. 19 to 26 (GHVDHGKT) contacts GTP. Thr-26 is a binding site for Mg(2+). Residues 61–65 (GITIS) are G2. A G3 region spans residues 82 to 85 (DCPG). GTP is bound by residues 82-86 (DCPGH) and 137-140 (NKCD). Residues 137–140 (NKCD) are G4. Residues 175–177 (SAL) form a G5 region.

It belongs to the TRAFAC class translation factor GTPase superfamily. Classic translation factor GTPase family. EF-Tu/EF-1A subfamily. Monomer.

It is found in the cytoplasm. The enzyme catalyses GTP + H2O = GDP + phosphate + H(+). In terms of biological role, GTP hydrolase that promotes the GTP-dependent binding of aminoacyl-tRNA to the A-site of ribosomes during protein biosynthesis. The polypeptide is Elongation factor Tu (Azorhizobium caulinodans (strain ATCC 43989 / DSM 5975 / JCM 20966 / LMG 6465 / NBRC 14845 / NCIMB 13405 / ORS 571)).